The sequence spans 1270 residues: DNA-directed RNA polymerase subunit beta (1270 aa).

This sequence belongs to the RNA polymerase beta chain family. In terms of assembly, the RNAP catalytic core consists of 2 alpha, 1 beta, 1 beta' and 1 omega subunit. When a sigma factor is associated with the core the holoenzyme is formed, which can initiate transcription.

The catalysed reaction is RNA(n) + a ribonucleoside 5'-triphosphate = RNA(n+1) + diphosphate. DNA-dependent RNA polymerase catalyzes the transcription of DNA into RNA using the four ribonucleoside triphosphates as substrates. The sequence is that of DNA-directed RNA polymerase subunit beta from Flavobacterium psychrophilum (strain ATCC 49511 / DSM 21280 / CIP 103535 / JIP02/86).